The sequence spans 481 residues: MADKITSRSEDYSQWYIDLVRSAKLADYADVKGCMVIRPNGYAIWEKMQAALDRMFKETGHVNAYFPLFIPESFIAKEAEHIEGFAPECAVVTHGGGQELAEKLYVRPTSETIIWSSYKKWIQSYRDLPLLINQWANVVRWEMRTRLFLRTTEFLWQEGHTAHATHEEAQEEVLRMINVYKTFAEEYMALPVILGKKSDSEKFAGALETFCIEAMMQDGKALQAGTSHDLGQNFAKAFDCKFQTHEKTLEYVWATSWGVSTRLIGALIMAHSDDRGLVLPPRLATRQVVIIPILKGDKESVLHHADNIAAALTKAGISAFVDSSEQNSPGWKFAEYELQGIPLRLELGPRDIKNGMCVVARRDTLEKTEIALDDRLVMSINEILNDIQQDMFDAALRFRQERTVQVNNYDDFKVAVEKGFVIAHWDGTVETEAKIKEETKATIRVLPQEDDYCDTYGINEPGTCIYSGKPSARKVVFAKAY.

The protein belongs to the class-II aminoacyl-tRNA synthetase family. ProS type 3 subfamily. Homodimer.

It localises to the cytoplasm. The catalysed reaction is tRNA(Pro) + L-proline + ATP = L-prolyl-tRNA(Pro) + AMP + diphosphate. Functionally, catalyzes the attachment of proline to tRNA(Pro) in a two-step reaction: proline is first activated by ATP to form Pro-AMP and then transferred to the acceptor end of tRNA(Pro). The polypeptide is Proline--tRNA ligase (Chlorobium chlorochromatii (strain CaD3)).